Consider the following 348-residue polypeptide: Mitogen-activated protein kinase kinase 5 (348 aa).

Disordered regions lie at residues 1–26 (MKPIQSPSGVASPMKNRLRKRPDLSL) and 35–54 (LAVPLPLPPPSSSSSAPASS). S6 is subject to Phosphoserine; by ASK7. The Protein kinase domain occupies 70-325 (LERVNRIGSG…AQQLLQHPFI (256 aa)). ATP-binding positions include 76–84 (IGSGAGGTV) and K99. D187 acts as the Proton acceptor in catalysis. A Phosphothreonine modification is found at T215. Residue S221 is modified to Phosphoserine; by ASK7. S221 is subject to Phosphoserine. T225 bears the Phosphothreonine; by ASK7 mark. ADP-ribosylarginine; by HopF2 is present on R313.

This sequence belongs to the protein kinase superfamily. STE Ser/Thr protein kinase family. MAP kinase kinase subfamily. Interacts with P.syringae type III effector HopF2. Interacts with BZR1. Interacts with MPK6 and MPK3. Interacts with RACK1A, RACK1B and RACK1C. Interacts with MAPKKK5 mainly in the cytosol. Binds to BASL. Interacts with MAPKKK20. In terms of processing, phosphorylation at Thr-215 and Ser-221 by MAP kinase kinase kinases positively regulates kinase activity. Phosphorylated by MAPKKK5 and MAPKKK20 in response to abscisic acid (ABA). ADP-ribosylation at Arg-313 by P.syringae type III effector HopF2 reduces the ability of the protein to phosphorylate downstream MPK6. Expressed higher in stems and leaves than in flowers and roots.

The enzyme catalyses L-seryl-[protein] + ATP = O-phospho-L-seryl-[protein] + ADP + H(+). The catalysed reaction is L-threonyl-[protein] + ATP = O-phospho-L-threonyl-[protein] + ADP + H(+). It carries out the reaction L-tyrosyl-[protein] + ATP = O-phospho-L-tyrosyl-[protein] + ADP + H(+). Activated through serine and threonine phosphorylation by MEKK1 and MAPKKK20 in response to abscisic acid (ABA). Inhibited through phosphorylation by GSK3/Shaggy-like kinase ASKs. Inhibited through ADP-Ribosylation by P.syringae HopF2. Activated after high light stress. Its function is as follows. Mitogen-activated protein kinase kinase (MAPKK) which regulates abscisic acid (ABA) responses in a MAPKKK20-MKK5-MPK6 cascade involved in root growth (e.g. root cell division and elongation) and stomatal response, probably via MAPK6 activation by protein phosphorylation. Involved in the second phase of hydrogen peroxide generation during hypersensitive response-like cell death. Involved in the innate immune MAP kinase signaling cascade (MEKK1, MKK4/MKK5 and MPK3/MPK6) downstream of bacterial flagellin receptor FLS2. Activates by phosphorylation the downstream MPK3 and MPK6. YDA-MKK4/MKK5-MPK3/MPK6 module regulates stomatal cell fate before the guard mother cell (GMC) is specified. This MAPK cascade also functions downstream of the ER receptor in regulating coordinated local cell proliferation, which shapes the morphology of plant organs. MKK4 and MKK5 participate in the regulation of floral organ abscission. Target of the Pseudomonas syringae type III effector HopF2, that inhibits the activation of the downstream MPK6 and PAMP-triggered immunity. Plays a critical role in high light stress tolerance by the mediation of the Cu/Zn SODs CSD1 and CSD2 gene expression. Phosphorylates BZR1 in vitro. The chain is Mitogen-activated protein kinase kinase 5 from Arabidopsis thaliana (Mouse-ear cress).